The sequence spans 407 residues: V-set and immunoglobulin domain-containing protein 1 (407 aa).

A signal peptide spans 1-22 (MMVFAFWKVFLILNCLAGQVSM). Residues 23–134 (VQVTIPDTFV…HFVGKNQGLL (112 aa)) form the Ig-like V-type domain. Residues 23–234 (VQVTIPDTFV…EIDLTSSHPE (212 aa)) lie on the Extracellular side of the membrane. A glycan (N-linked (GlcNAc...) asparagine) is linked at Asn-39. 2 disulfides stabilise this stretch: Cys-44–Cys-118 and Cys-163–Cys-213. The region spanning 145–229 (PFCTIQGRPE…GNSSCEIDLT (85 aa)) is the Ig-like C2-type domain. N-linked (GlcNAc...) asparagine glycosylation is found at Asn-202 and Asn-221. A helical membrane pass occupies residues 235–255 (VGIIIGALVGALIGAAVIICV). The Cytoplasmic portion of the chain corresponds to 256-407 (VYFARNKVKS…SKAGEDTVKA (152 aa)). 2 disordered regions span residues 268-289 (QKNLNSSTELEPMTKVHHPQQS) and 318-407 (TAVL…TVKA). Ser-273 and Ser-274 each carry phosphoserine. Over residues 361–371 (DPETETEPEPE) the composition is skewed to acidic residues.

The protein resides in the membrane. The chain is V-set and immunoglobulin domain-containing protein 1 (Vsig1) from Mus musculus (Mouse).